The primary structure comprises 405 residues: Type II secretion system protein F (405 aa).

At 1 to 169 (MPLYRYKALD…SRALKGKVIN (169 aa)) the chain is on the cytoplasmic side. Ca(2+) contacts are provided by Asp98, Gln151, and Asp155. Residues 170–190 (ALIYPAILLAVVGCALLFLLG) traverse the membrane as a helical segment. Residues 191-218 (YVVPQFAQMYESLDVALPWFTQAVLSVG) lie on the Periplasmic side of the membrane. The chain crosses the membrane as a helical span at residues 219–239 (LLVRDWWLVLVVIPGVLGLWL). Over 240-370 (DRKRRNAAFR…LETAQAIDRA (131 aa)) the chain is Cytoplasmic. Residues 371 to 391 (LAALVPLITLVLASVVGLVII) form a helical membrane-spanning segment. The Periplasmic segment spans residues 392 to 405 (SVLVPLYDLTNAIG).

This sequence belongs to the GSP F family. In terms of assembly, type II secretion system is composed of four main components: the outer membrane complex, the inner membrane complex, the cytoplasmic secretion ATPase and the periplasm-spanning pseudopilus. Homodimer. Interacts with XpsE and XpsL components.

It localises to the cell inner membrane. Component of the type II secretion system inner membrane complex required for the energy-dependent secretion of extracellular factors such as proteases and toxins from the periplasm. The polypeptide is Type II secretion system protein F (xpsF) (Xanthomonas campestris pv. campestris (strain ATCC 33913 / DSM 3586 / NCPPB 528 / LMG 568 / P 25)).